The chain runs to 118 residues: MPRVKRGFKARRRRNKVLKLAKGYRGARSKLFRSATEAVDRALNYAFRDRRVKKRDFRALWIARINASARENGLSYSRLVHGLKKAEIALDRKILAELAVTDPAGFTAIADKAKAQLQ.

The protein belongs to the bacterial ribosomal protein bL20 family.

Its function is as follows. Binds directly to 23S ribosomal RNA and is necessary for the in vitro assembly process of the 50S ribosomal subunit. It is not involved in the protein synthesizing functions of that subunit. The polypeptide is Large ribosomal subunit protein bL20 (Syntrophotalea carbinolica (strain DSM 2380 / NBRC 103641 / GraBd1) (Pelobacter carbinolicus)).